Consider the following 204-residue polypeptide: Methylthioribulose-1-phosphate dehydratase (204 aa).

Zn(2+) is bound by residues His-94 and His-96.

This sequence belongs to the aldolase class II family. MtnB subfamily. It depends on Zn(2+) as a cofactor.

The enzyme catalyses 5-(methylsulfanyl)-D-ribulose 1-phosphate = 5-methylsulfanyl-2,3-dioxopentyl phosphate + H2O. The protein operates within amino-acid biosynthesis; L-methionine biosynthesis via salvage pathway; L-methionine from S-methyl-5-thio-alpha-D-ribose 1-phosphate: step 2/6. Catalyzes the dehydration of methylthioribulose-1-phosphate (MTRu-1-P) into 2,3-diketo-5-methylthiopentyl-1-phosphate (DK-MTP-1-P). This Serratia proteamaculans (strain 568) protein is Methylthioribulose-1-phosphate dehydratase.